The primary structure comprises 274 residues: Diaminopimelate epimerase (274 aa).

2 residues coordinate substrate: asparagine 11 and asparagine 60. The active-site Proton donor is cysteine 69. Substrate-binding positions include 70-71, asparagine 191, and 209-210; these read GN and ER. Catalysis depends on cysteine 218, which acts as the Proton acceptor. A substrate-binding site is contributed by 219 to 220; the sequence is GS.

The protein belongs to the diaminopimelate epimerase family. In terms of assembly, homodimer.

The protein localises to the cytoplasm. The enzyme catalyses (2S,6S)-2,6-diaminopimelate = meso-2,6-diaminopimelate. The protein operates within amino-acid biosynthesis; L-lysine biosynthesis via DAP pathway; DL-2,6-diaminopimelate from LL-2,6-diaminopimelate: step 1/1. Functionally, catalyzes the stereoinversion of LL-2,6-diaminopimelate (L,L-DAP) to meso-diaminopimelate (meso-DAP), a precursor of L-lysine and an essential component of the bacterial peptidoglycan. This is Diaminopimelate epimerase from Caldanaerobacter subterraneus subsp. tengcongensis (strain DSM 15242 / JCM 11007 / NBRC 100824 / MB4) (Thermoanaerobacter tengcongensis).